A 430-amino-acid chain; its full sequence is Histidinol dehydrogenase (430 aa).

NAD(+) is bound by residues Y130, Q191, and N214. Residues S237, Q259, and H262 each coordinate substrate. The Zn(2+) site is built by Q259 and H262. Catalysis depends on proton acceptor residues E327 and H328. Residues H328, D361, E415, and H420 each coordinate substrate. D361 is a binding site for Zn(2+). H420 provides a ligand contact to Zn(2+).

The protein belongs to the histidinol dehydrogenase family. Zn(2+) serves as cofactor.

The enzyme catalyses L-histidinol + 2 NAD(+) + H2O = L-histidine + 2 NADH + 3 H(+). It participates in amino-acid biosynthesis; L-histidine biosynthesis; L-histidine from 5-phospho-alpha-D-ribose 1-diphosphate: step 9/9. Catalyzes the sequential NAD-dependent oxidations of L-histidinol to L-histidinaldehyde and then to L-histidine. This is Histidinol dehydrogenase from Brucella abortus (strain 2308).